Consider the following 119-residue polypeptide: MARVKRGVQARRRHKKILTLAKGYYNARRKVFRVAKQAVIKAQQYAYIGRKQKKRNFRSLWITRINAAARINGLSYSRFMNGLLKAGITLDRKVLADIAVHDAAGFAALAEKAKGALAA.

Belongs to the bacterial ribosomal protein bL20 family.

Functionally, binds directly to 23S ribosomal RNA and is necessary for the in vitro assembly process of the 50S ribosomal subunit. It is not involved in the protein synthesizing functions of that subunit. This chain is Large ribosomal subunit protein bL20, found in Xanthomonas oryzae pv. oryzae (strain KACC10331 / KXO85).